We begin with the raw amino-acid sequence, 378 residues long: Erythronate-4-phosphate dehydrogenase (378 aa).

S45 and T66 together coordinate substrate. Residues D146 and T175 each coordinate NAD(+). R208 is an active-site residue. D232 provides a ligand contact to NAD(+). E237 is a catalytic residue. H254 acts as the Proton donor in catalysis. G257 is an NAD(+) binding site. Y258 contacts substrate.

This sequence belongs to the D-isomer specific 2-hydroxyacid dehydrogenase family. PdxB subfamily. Homodimer.

It localises to the cytoplasm. The enzyme catalyses 4-phospho-D-erythronate + NAD(+) = (R)-3-hydroxy-2-oxo-4-phosphooxybutanoate + NADH + H(+). Its pathway is cofactor biosynthesis; pyridoxine 5'-phosphate biosynthesis; pyridoxine 5'-phosphate from D-erythrose 4-phosphate: step 2/5. In terms of biological role, catalyzes the oxidation of erythronate-4-phosphate to 3-hydroxy-2-oxo-4-phosphonooxybutanoate. This is Erythronate-4-phosphate dehydrogenase from Escherichia coli O127:H6 (strain E2348/69 / EPEC).